The chain runs to 305 residues: GMP synthase [glutamine-hydrolyzing] subunit B (305 aa).

One can recognise a GMPS ATP-PPase domain in the interval 2–184 (VKPEKFIPKA…LKLPDEICER (183 aa)). 29-35 (SGGVDSS) lines the ATP pocket.

In terms of assembly, heterodimer composed of a glutamine amidotransferase subunit (A) and a GMP-binding subunit (B).

It catalyses the reaction XMP + L-glutamine + ATP + H2O = GMP + L-glutamate + AMP + diphosphate + 2 H(+). It participates in purine metabolism; GMP biosynthesis; GMP from XMP (L-Gln route): step 1/1. In terms of biological role, catalyzes the synthesis of GMP from XMP. The protein is GMP synthase [glutamine-hydrolyzing] subunit B of Methanosarcina barkeri (strain Fusaro / DSM 804).